We begin with the raw amino-acid sequence, 956 residues long: Thrombospondin-3 (956 aa).

The N-terminal stretch at 1–22 (METQELRGALALLLLCFFTSAS) is a signal peptide. Residues 23–193 (QDLQVIDLLT…VESMKIILGG (171 aa)) enclose the Laminin G-like domain. 21 cysteine pairs are disulfide-bonded: Cys278–Cys289, Cys283–Cys300, Cys303–Cys314, Cys320–Cys332, Cys326–Cys341, Cys344–Cys368, Cys374–Cys388, Cys382–Cys397, Cys400–Cys412, Cys418–Cys432, Cys426–Cys442, Cys444–Cys455, Cys471–Cys478, Cys483–Cys503, Cys519–Cys539, Cys542–Cys562, Cys578–Cys598, Cys601–Cys621, Cys639–Cys659, Cys679–Cys699, and Cys715–Cys936. Residue Asn310 is glycosylated (N-linked (GlcNAc...) asparagine). Residues 316–354 (DINECAHADPCFPGSSCINTMPGFHCEACPRGYKGTQVS) form the EGF-like 1; calcium-binding domain. In terms of domain architecture, EGF-like 2; calcium-binding spans 370–410 (DIDECNDGNNGGCDPNSICTNTVGSFKCGPCRLGFLGNQSQ). N-linked (GlcNAc...) asparagine glycosylation occurs at Asn407. The 43-residue stretch at 414-456 (PARTCHSPAHSPCHIHAHCLFERNGAVSCQCNVGWAGNGNVCG) folds into the EGF-like 3 domain. TSP type-3 repeat units follow at residues 457-491 (TDTD…NSGQ), 492-527 (EDAD…NKDQ), 528-550 (QNSD…NNDQ), 551-586 (KDTD…NPLQ), 587-609 (TDRD…NPTQ), 610-647 (TDAD…NSSQ), 648-687 (LDSD…NPNQ), and 688-723 (KDSD…EVTL). Disordered regions lie at residues 518–537 (NCRL…SFGD) and 546–702 (PNND…CEDD). The span at 555–568 (GNGEGDACDNDVDG) shows a compositional bias: acidic residues. Over residues 612-628 (ADSDLVGDVCDTNEDSD) the composition is skewed to acidic residues. An N-linked (GlcNAc...) asparagine glycan is attached at Asn644. The span at 650 to 667 (SDNDGLGDECDGDDDNDG) shows a compositional bias: acidic residues. A TSP C-terminal domain is found at 727-941 (RAYQTVVLDP…LQYRCNDTVP (215 aa)). N-linked (GlcNAc...) asparagine glycosylation occurs at Asn937.

It belongs to the thrombospondin family. In terms of assembly, oligomer; disulfide-linked.

Its function is as follows. Adhesive glycoprotein that mediates cell-to-cell and cell-to-matrix interactions. Can bind to fibrinogen, fibronectin, laminin and type V collagen. This is Thrombospondin-3 (THBS3) from Homo sapiens (Human).